The following is a 1122-amino-acid chain: AP-4 complex subunit epsilon-1 (1122 aa).

Position 699 is a phosphoserine (Ser699). 2 stretches are compositionally biased toward basic and acidic residues: residues 714–728 and 745–760; these read YLPKKESGTGDKPEA and TTRKDQAQGHIPSTEE. Disordered regions lie at residues 714-760 and 797-861; these read YLPK…STEE and SKLK…AEKL. Positions 726 to 1122 are interaction with TEPSIN; it reads PEASHVPAEG…CHCQKVMQTS (397 aa). Residues 841–853 show a composition bias toward low complexity; it reads ELSSELFRSESLS. The residue at position 851 (Ser851) is a Phosphoserine.

Belongs to the adaptor complexes large subunit family. In terms of assembly, adaptor protein complex 4 (AP-4) is a heterotetramer composed of two large adaptins (epsilon-type subunit AP4E1 and beta-type subunit AP4B1), a medium adaptin (mu-type subunit AP4M1) and a small adaptin (sigma-type AP4S1). Interacts with TEPSIN. Interacts with GRIA2; probably indirect it mediates the somatodendritic localization of GRIA2 in neurons.

It localises to the golgi apparatus. The protein resides in the trans-Golgi network membrane. In terms of biological role, component of the adaptor protein complex 4 (AP-4). Adaptor protein complexes are vesicle coat components involved both in vesicle formation and cargo selection. They control the vesicular transport of proteins in different trafficking pathways. AP-4 forms a non clathrin-associated coat on vesicles departing the trans-Golgi network (TGN) and may be involved in the targeting of proteins from the trans-Golgi network (TGN) to the endosomal-lysosomal system. It is also involved in protein sorting to the basolateral membrane in epithelial cells and the proper asymmetric localization of somatodendritic proteins in neurons. AP-4 is involved in the recognition and binding of tyrosine-based sorting signals found in the cytoplasmic part of cargos, but may also recognize other types of sorting signal. The protein is AP-4 complex subunit epsilon-1 of Mus musculus (Mouse).